The chain runs to 355 residues: UDP-N-acetylglucosamine--N-acetylmuramyl-(pentapeptide) pyrophosphoryl-undecaprenol N-acetylglucosamine transferase (355 aa).

UDP-N-acetyl-alpha-D-glucosamine contacts are provided by residues 13 to 15 (TGG), N125, R162, S190, I244, and Q289.

Belongs to the glycosyltransferase 28 family. MurG subfamily.

It is found in the cell inner membrane. The enzyme catalyses di-trans,octa-cis-undecaprenyl diphospho-N-acetyl-alpha-D-muramoyl-L-alanyl-D-glutamyl-meso-2,6-diaminopimeloyl-D-alanyl-D-alanine + UDP-N-acetyl-alpha-D-glucosamine = di-trans,octa-cis-undecaprenyl diphospho-[N-acetyl-alpha-D-glucosaminyl-(1-&gt;4)]-N-acetyl-alpha-D-muramoyl-L-alanyl-D-glutamyl-meso-2,6-diaminopimeloyl-D-alanyl-D-alanine + UDP + H(+). It functions in the pathway cell wall biogenesis; peptidoglycan biosynthesis. In terms of biological role, cell wall formation. Catalyzes the transfer of a GlcNAc subunit on undecaprenyl-pyrophosphoryl-MurNAc-pentapeptide (lipid intermediate I) to form undecaprenyl-pyrophosphoryl-MurNAc-(pentapeptide)GlcNAc (lipid intermediate II). This chain is UDP-N-acetylglucosamine--N-acetylmuramyl-(pentapeptide) pyrophosphoryl-undecaprenol N-acetylglucosamine transferase, found in Neisseria gonorrhoeae (strain ATCC 700825 / FA 1090).